We begin with the raw amino-acid sequence, 353 residues long: Photosystem II D2 protein (353 aa).

Position 2 is an N-acetylthreonine (threonine 2). Threonine 2 carries the post-translational modification Phosphothreonine. A helical membrane pass occupies residues 41-61 (CAYFALGGWFTGTTFVTSWYT). Chlorophyll a is bound at residue histidine 118. The chain crosses the membrane as a helical span at residues 125–141 (GFMLRQFELARSVQLRP). Pheophytin a contacts are provided by glutamine 130 and asparagine 143. Residues 153-166 (VFVSVFLIYPLGQS) form a helical membrane-spanning segment. Residue histidine 198 participates in chlorophyll a binding. The chain crosses the membrane as a helical span at residues 208-228 (AALLCAIHGATVENTLFEDGD). Positions 215 and 262 each coordinate a plastoquinone. Residue histidine 215 coordinates Fe cation. Histidine 269 serves as a coordination point for Fe cation. A helical membrane pass occupies residues 279 to 295 (GLWMSALGVVGLALNLR).

It belongs to the reaction center PufL/M/PsbA/D family. PSII is composed of 1 copy each of membrane proteins PsbA, PsbB, PsbC, PsbD, PsbE, PsbF, PsbH, PsbI, PsbJ, PsbK, PsbL, PsbM, PsbT, PsbX, PsbY, PsbZ, Psb30/Ycf12, at least 3 peripheral proteins of the oxygen-evolving complex and a large number of cofactors. It forms dimeric complexes. The D1/D2 heterodimer binds P680, chlorophylls that are the primary electron donor of PSII, and subsequent electron acceptors. It shares a non-heme iron and each subunit binds pheophytin, quinone, additional chlorophylls, carotenoids and lipids. There is also a Cl(-1) ion associated with D1 and D2, which is required for oxygen evolution. The PSII complex binds additional chlorophylls, carotenoids and specific lipids. serves as cofactor.

It localises to the plastid. Its subcellular location is the chloroplast thylakoid membrane. It catalyses the reaction 2 a plastoquinone + 4 hnu + 2 H2O = 2 a plastoquinol + O2. Photosystem II (PSII) is a light-driven water:plastoquinone oxidoreductase that uses light energy to abstract electrons from H(2)O, generating O(2) and a proton gradient subsequently used for ATP formation. It consists of a core antenna complex that captures photons, and an electron transfer chain that converts photonic excitation into a charge separation. The D1/D2 (PsbA/PsbD) reaction center heterodimer binds P680, the primary electron donor of PSII as well as several subsequent electron acceptors. D2 is needed for assembly of a stable PSII complex. In Chloranthus spicatus (Chulantree), this protein is Photosystem II D2 protein.